Reading from the N-terminus, the 182-residue chain is Adenine phosphoribosyltransferase (182 aa).

It belongs to the purine/pyrimidine phosphoribosyltransferase family. As to quaternary structure, homodimer.

It is found in the cytoplasm. The enzyme catalyses AMP + diphosphate = 5-phospho-alpha-D-ribose 1-diphosphate + adenine. It participates in purine metabolism; AMP biosynthesis via salvage pathway; AMP from adenine: step 1/1. Functionally, catalyzes a salvage reaction resulting in the formation of AMP, that is energically less costly than de novo synthesis. The protein is Adenine phosphoribosyltransferase of Campylobacter jejuni subsp. doylei (strain ATCC BAA-1458 / RM4099 / 269.97).